Consider the following 202-residue polypeptide: Small ribosomal subunit protein uS4c (202 aa).

Positions methionine 90–leucine 165 constitute an S4 RNA-binding domain.

This sequence belongs to the universal ribosomal protein uS4 family. Part of the 30S ribosomal subunit. Contacts protein S5. The interaction surface between S4 and S5 is involved in control of translational fidelity.

The protein resides in the plastid. The protein localises to the chloroplast. One of the primary rRNA binding proteins, it binds directly to 16S rRNA where it nucleates assembly of the body of the 30S subunit. Functionally, with S5 and S12 plays an important role in translational accuracy. The chain is Small ribosomal subunit protein uS4c (rps4) from Diphyscium foliosum (Nut-moss).